A 608-amino-acid chain; its full sequence is Elongation factor 4 (608 aa).

The 183-residue stretch at 11-193 folds into the tr-type G domain; it reads KKIRNFSIIA…QIVEKVPEPS (183 aa). Residues 23–28 and 140–143 contribute to the GTP site; these read DHGKST and NKID.

It belongs to the TRAFAC class translation factor GTPase superfamily. Classic translation factor GTPase family. LepA subfamily.

It localises to the cell membrane. The catalysed reaction is GTP + H2O = GDP + phosphate + H(+). Its function is as follows. Required for accurate and efficient protein synthesis under certain stress conditions. May act as a fidelity factor of the translation reaction, by catalyzing a one-codon backward translocation of tRNAs on improperly translocated ribosomes. Back-translocation proceeds from a post-translocation (POST) complex to a pre-translocation (PRE) complex, thus giving elongation factor G a second chance to translocate the tRNAs correctly. Binds to ribosomes in a GTP-dependent manner. The sequence is that of Elongation factor 4 from Listeria innocua serovar 6a (strain ATCC BAA-680 / CLIP 11262).